We begin with the raw amino-acid sequence, 1028 residues long: Carbamoyl phosphate synthase large chain (1028 aa).

The tract at residues 1–409 is carboxyphosphate synthetic domain; it reads MPPRRDLKKI…ALMKALRGLE (409 aa). Residues arginine 129, arginine 169, glycine 175, glycine 176, glutamate 208, valine 210, glutamate 215, glycine 241, valine 242, histidine 243, glutamine 285, and glutamate 299 each contribute to the ATP site. The 196-residue stretch at 133–328 folds into the ATP-grasp 1 domain; that stretch reads QEAMQRIGLE…IAKIAALLAV (196 aa). Positions 285, 299, and 301 each coordinate Mg(2+). Positions 285, 299, and 301 each coordinate Mn(2+). The segment at 410-549 is oligomerization domain; that stretch reads RDVRALAGVR…YSTYELEDEV (140 aa). The interval 550-933 is carbamoyl phosphate synthetic domain; that stretch reads WPSQKPKVVI…AYYKAELGAG (384 aa). An ATP-grasp 2 domain is found at 674-866; it reads HALCQRLGIP…LAKLAALIAV (193 aa). ATP-binding residues include arginine 710, arginine 750, leucine 752, glutamate 757, glycine 782, valine 783, histidine 784, serine 785, glutamine 825, and glutamate 837. Mg(2+) is bound by residues glutamine 825, glutamate 837, and asparagine 839. 3 residues coordinate Mn(2+): glutamine 825, glutamate 837, and asparagine 839. The MGS-like domain occupies 934-1028; it reads QRLPLSGRVR…QDWHQKAPRG (95 aa). The tract at residues 934–1028 is allosteric domain; it reads QRLPLSGRVR…QDWHQKAPRG (95 aa).

The protein belongs to the CarB family. As to quaternary structure, composed of two chains; the small (or glutamine) chain promotes the hydrolysis of glutamine to ammonia, which is used by the large (or ammonia) chain to synthesize carbamoyl phosphate. Tetramer of heterodimers (alpha,beta)4. Mg(2+) serves as cofactor. It depends on Mn(2+) as a cofactor.

It catalyses the reaction hydrogencarbonate + L-glutamine + 2 ATP + H2O = carbamoyl phosphate + L-glutamate + 2 ADP + phosphate + 2 H(+). The catalysed reaction is hydrogencarbonate + NH4(+) + 2 ATP = carbamoyl phosphate + 2 ADP + phosphate + 2 H(+). It functions in the pathway amino-acid biosynthesis; L-arginine biosynthesis; carbamoyl phosphate from bicarbonate: step 1/1. The protein operates within pyrimidine metabolism; UMP biosynthesis via de novo pathway; (S)-dihydroorotate from bicarbonate: step 1/3. In terms of biological role, large subunit of the glutamine-dependent carbamoyl phosphate synthetase (CPSase). CPSase catalyzes the formation of carbamoyl phosphate from the ammonia moiety of glutamine, carbonate, and phosphate donated by ATP, constituting the first step of 2 biosynthetic pathways, one leading to arginine and/or urea and the other to pyrimidine nucleotides. The large subunit (synthetase) binds the substrates ammonia (free or transferred from glutamine from the small subunit), hydrogencarbonate and ATP and carries out an ATP-coupled ligase reaction, activating hydrogencarbonate by forming carboxy phosphate which reacts with ammonia to form carbamoyl phosphate. The protein is Carbamoyl phosphate synthase large chain of Thermus thermophilus (strain ATCC 27634 / DSM 579 / HB8).